Here is a 194-residue protein sequence, read N- to C-terminus: Metalloproteinase inhibitor 2 (194 aa).

Cys-1 contacts Zn(2+). Involved in metalloproteinase-binding stretches follow at residues 1 to 4 (CSCS) and 69 to 70 (SA). Intrachain disulfides connect Cys-1/Cys-72, Cys-3/Cys-101, Cys-13/Cys-126, Cys-128/Cys-175, Cys-133/Cys-138, and Cys-146/Cys-167. One can recognise an NTR domain in the interval 1–126 (CSCSPVHPQQ…SLNHRYQMGC (126 aa)).

The protein belongs to the protease inhibitor I35 (TIMP) family. Interacts (via the C-terminal) with MMP2 (via the C-terminal PEX domain); the interaction inhibits the MMP2 activity. The activity of TIMP2 is dependent on the presence of disulfide bonds.

It localises to the secreted. Complexes with metalloproteinases (such as collagenases) and irreversibly inactivates them by binding to their catalytic zinc cofactor. The polypeptide is Metalloproteinase inhibitor 2 (TIMP2) (Oryctolagus cuniculus (Rabbit)).